Here is a 320-residue protein sequence, read N- to C-terminus: Methyltransferase gedG (320 aa).

Positions 61–154 (DAGAGNGVYS…QLRPGGTFAC (94 aa)) are methyltransferase domain. Residues 231-252 (GLLPPERRGEVTEPDHEGPHDQ) are disordered. Basic and acidic residues predominate over residues 235–252 (PERRGEVTEPDHEGPHDQ).

The protein belongs to the methyltransferase superfamily.

It participates in secondary metabolite biosynthesis. In terms of biological role, methyltransferase; part of the gene cluster that mediates the biosynthesis of geodin, an intermediate in the biosynthesis of other natural products. The pathway begins with the synthesis of atrochrysone thioester by the polyketide synthase (PKS) gedC. The atrochrysone carboxyl ACP thioesterase gedB then breaks the thioester bond and releases the atrochrysone carboxylic acid from gedC. The atrochrysone carboxylic acid is then converted to atrochrysone which is further transformed into emodinanthrone. The next step is performed by the emodinanthrone oxygenase gedH that catalyzes the oxidation of emodinanthrone to emodin. Emodin O-methyltransferase encoded probably by gedA then catalyzes methylation of the 8-hydroxy group of emodin to form questin. Ring cleavage of questin by questin oxidase gedK leads to desmethylsulochrin via several intermediates including questin epoxide. Another methylation step probably catalyzed by methyltransferase gedG leads to the formation of sulochrin which is further converted to dihydrogeodin by the sulochrin halogenase gedL. Finally, the dihydrogeodin oxidase gedJ catalyzes the stereospecific phenol oxidative coupling reaction converting dihydrogeodin to geodin. The sequence is that of Methyltransferase gedG from Aspergillus terreus (strain NIH 2624 / FGSC A1156).